A 194-amino-acid polypeptide reads, in one-letter code: Imidazoleglycerol-phosphate dehydratase (194 aa).

This sequence belongs to the imidazoleglycerol-phosphate dehydratase family.

It is found in the cytoplasm. It carries out the reaction D-erythro-1-(imidazol-4-yl)glycerol 3-phosphate = 3-(imidazol-4-yl)-2-oxopropyl phosphate + H2O. Its pathway is amino-acid biosynthesis; L-histidine biosynthesis; L-histidine from 5-phospho-alpha-D-ribose 1-diphosphate: step 6/9. The sequence is that of Imidazoleglycerol-phosphate dehydratase from Streptococcus thermophilus (strain ATCC BAA-491 / LMD-9).